Here is a 100-residue protein sequence, read N- to C-terminus: Replication restart protein PriB (100 aa).

The SSB domain maps to Met1–Ile100.

It belongs to the PriB family. In terms of assembly, homodimer. Interacts with PriA and DnaT. Component of the replication restart primosome. Primosome assembly occurs via a 'hand-off' mechanism. PriA binds to replication forks, subsequently PriB then DnaT bind; DnaT then displaces ssDNA to generate the helicase loading substrate.

Its function is as follows. Involved in the restart of stalled replication forks, which reloads the replicative helicase on sites other than the origin of replication; the PriA-PriB pathway is the major replication restart pathway. During primosome assembly it facilitates complex formation between PriA and DnaT on DNA; stabilizes PriA on DNA. Stimulates the DNA unwinding activity of PriA helicase. The protein is Replication restart protein PriB of Vibrio parahaemolyticus serotype O3:K6 (strain RIMD 2210633).